We begin with the raw amino-acid sequence, 604 residues long: Elongation factor 4 (604 aa).

One can recognise a tr-type G domain in the interval 4 to 186 (EFIRNFSIIA…AIVHLVPPPK (183 aa)). GTP is bound by residues 16-21 (DHGKST) and 133-136 (NKID).

This sequence belongs to the TRAFAC class translation factor GTPase superfamily. Classic translation factor GTPase family. LepA subfamily.

The protein localises to the cell inner membrane. The catalysed reaction is GTP + H2O = GDP + phosphate + H(+). Functionally, required for accurate and efficient protein synthesis under certain stress conditions. May act as a fidelity factor of the translation reaction, by catalyzing a one-codon backward translocation of tRNAs on improperly translocated ribosomes. Back-translocation proceeds from a post-translocation (POST) complex to a pre-translocation (PRE) complex, thus giving elongation factor G a second chance to translocate the tRNAs correctly. Binds to ribosomes in a GTP-dependent manner. This is Elongation factor 4 from Solibacter usitatus (strain Ellin6076).